The primary structure comprises 165 residues: Chorismate pyruvate-lyase (165 aa).

Residues Met-35, Arg-77, Leu-115, and Glu-156 each contribute to the substrate site.

The protein belongs to the UbiC family. As to quaternary structure, monomer.

It is found in the cytoplasm. The enzyme catalyses chorismate = 4-hydroxybenzoate + pyruvate. The protein operates within cofactor biosynthesis; ubiquinone biosynthesis. Functionally, removes the pyruvyl group from chorismate, with concomitant aromatization of the ring, to provide 4-hydroxybenzoate (4HB) for the ubiquinone pathway. This Citrobacter koseri (strain ATCC BAA-895 / CDC 4225-83 / SGSC4696) protein is Chorismate pyruvate-lyase.